Here is a 274-residue protein sequence, read N- to C-terminus: 4-diphosphocytidyl-2-C-methyl-D-erythritol kinase (274 aa).

The active site involves Lys-8. An ATP-binding site is contributed by 94-104 (PSGAGLGGGSA). Residue Asp-136 is part of the active site.

This sequence belongs to the GHMP kinase family. IspE subfamily.

The enzyme catalyses 4-CDP-2-C-methyl-D-erythritol + ATP = 4-CDP-2-C-methyl-D-erythritol 2-phosphate + ADP + H(+). Its pathway is isoprenoid biosynthesis; isopentenyl diphosphate biosynthesis via DXP pathway; isopentenyl diphosphate from 1-deoxy-D-xylulose 5-phosphate: step 3/6. In terms of biological role, catalyzes the phosphorylation of the position 2 hydroxy group of 4-diphosphocytidyl-2C-methyl-D-erythritol. The sequence is that of 4-diphosphocytidyl-2-C-methyl-D-erythritol kinase from Bacteroides fragilis (strain ATCC 25285 / DSM 2151 / CCUG 4856 / JCM 11019 / LMG 10263 / NCTC 9343 / Onslow / VPI 2553 / EN-2).